The following is a 577-amino-acid chain: Double-stranded RNA-binding protein Staufen homolog 1 (577 aa).

The residue at position 2 (serine 2) is an N-acetylserine. Residues 34 to 44 show a composition bias toward polar residues; it reads SIPSTTSSLPS. The segment at 34-55 is disordered; that stretch reads SIPSTTSSLPSENAGRPIQNSA. The DRBM 1 domain maps to 72–162; sequence TPTVELNALC…AAKALRILQN (91 aa). The residue at position 108 (arginine 108) is an Asymmetric dimethylarginine. Position 115 is an asymmetric dimethylarginine; alternate (arginine 115). Omega-N-methylarginine; alternate is present on arginine 115. Serine 176 bears the Phosphoserine mark. The DRBM 2 domain occupies 184-251; that stretch reads SEISQVFEIA…AIAVLEELKK (68 aa). Serine 278 is modified (phosphoserine). Positions 286–354 constitute a DRBM 3 domain; that stretch reads NPISRLAQIQ…AENMLEILGF (69 aa). The interval 360–397 is disordered; the sequence is QPTKPALKSEEKTPIKKPGDGRKVTFFEPGSGDENGTS. Residues 366-384 are compositionally biased toward basic and acidic residues; sequence LKSEEKTPIKKPGDGRKVT. Serine 390 is modified (phosphoserine).

As to quaternary structure, binds tubulin. Binds with low affinity single-stranded RNA or DNA homopolymers. Interacts with CASC3 in an RNA-dependent manner. Identified in a mRNP complex, at least composed of DHX9, DDX3X, ELAVL1, HNRNPU, IGF2BP1, ILF3, PABPC1, PCBP2, PTBP2, STAU1, STAU2, SYNCRIP and YBX1. (Microbial infection) Interacts with HERV-K rec and gag proteins. In terms of assembly, (Microbial infection) Interacts with HIV-1 GAG polyprotein. As to quaternary structure, (Microbial infection) Interacts with influenza virus NS1 protein. (Microbial infection) Interacts with Ebola virus NP, VP30 and VP35. In terms of tissue distribution, widely expressed. Expressed in brain, pancreas, heart, skeletal muscles, liver, lung, kidney and placenta.

It localises to the cytoplasm. The protein resides in the rough endoplasmic reticulum. Functionally, binds double-stranded RNA (regardless of the sequence) and tubulin. May play a role in specific positioning of mRNAs at given sites in the cell by cross-linking cytoskeletal and RNA components, and in stimulating their translation at the site. In terms of biological role, (Microbial infection) Plays a role in virus particles production of many viruses including of HIV-1, HERV-K, ebola virus and influenza virus. Acts by interacting with various viral proteins involved in particle budding process. This Homo sapiens (Human) protein is Double-stranded RNA-binding protein Staufen homolog 1 (STAU1).